Consider the following 736-residue polypeptide: Polyphosphate kinase (736 aa).

Asn-91 provides a ligand contact to ATP. Arg-421 and Arg-451 together coordinate Mg(2+). His-481 serves as the catalytic Phosphohistidine intermediate. Residues Tyr-514, Arg-610, and His-638 each coordinate ATP.

The protein belongs to the polyphosphate kinase 1 (PPK1) family. The cofactor is Mg(2+). An intermediate of this reaction is the autophosphorylated ppk in which a phosphate is covalently linked to a histidine residue through a N-P bond.

It catalyses the reaction [phosphate](n) + ATP = [phosphate](n+1) + ADP. Functionally, catalyzes the reversible transfer of the terminal phosphate of ATP to form a long-chain polyphosphate (polyP). This Pseudomonas syringae pv. tomato (strain ATCC BAA-871 / DC3000) protein is Polyphosphate kinase.